Here is a 251-residue protein sequence, read N- to C-terminus: Core protein VP8 (251 aa).

The propeptide at 1–32 (MSLLLENLIEEDTIFFAGSISEYDDLQMVIAG) is removed by core protease OPG083/I7.

This sequence belongs to the orthopoxvirus OPG098 family. Undergoes morphogenesis-associated proteolysis which cleaves the 28 kDa to a 25-kDa product. Proteolytic cleavage of major core proteins P4a (OPG136/A10L), P4b (OPG129/A3L), and VP8 (OPG098/L4R), which occurs at a late stage of core formation, is required for production of infectious mature virions (MV).

It is found in the virion. It localises to the host cytoplasm. Major core structural protein. The polypeptide is Core protein VP8 (OPG098) (Vaccinia virus (strain Western Reserve) (VACV)).